The sequence spans 212 residues: Thymidylate kinase (212 aa).

Position 10–17 (10–17 (GPEGAGKT)) interacts with ATP.

The protein belongs to the thymidylate kinase family.

It carries out the reaction dTMP + ATP = dTDP + ADP. Functionally, phosphorylation of dTMP to form dTDP in both de novo and salvage pathways of dTTP synthesis. In Bacillus licheniformis (strain ATCC 14580 / DSM 13 / JCM 2505 / CCUG 7422 / NBRC 12200 / NCIMB 9375 / NCTC 10341 / NRRL NRS-1264 / Gibson 46), this protein is Thymidylate kinase.